A 416-amino-acid chain; its full sequence is Calreticulin (416 aa).

A signal peptide spans 1 to 17 (MLLSVPLLLGLLGLAAA). The interval 18 to 197 (DPAIYFKEQF…NSQVESGSLE (180 aa)) is N-domain. Gln26 lines the Ca(2+) pocket. The residue at position 48 (Lys48) is an N6-acetyllysine. 2 residues coordinate Ca(2+): Lys62 and Lys64. Residue Lys64 is modified to N6-(2-hydroxyisobutyryl)lysine. An intrachain disulfide couples Cys105 to Cys137. Tyr109, Lys111, Tyr128, and Asp135 together coordinate an alpha-D-glucoside. The residue at position 159 (Lys159) is an N6-acetyllysine. The stretch at 191–202 (VESGSLEDDWDF) is one 1-1 repeat. The interval 191 to 255 (VESGSLEDDW…DAKKPEDWDE (65 aa)) is 4 X approximate repeats. The segment at 193 to 277 (SGSLEDDWDF…NPEYKGEWKP (85 aa)) is disordered. The interval 198–308 (DDWDFLPPKK…YSPDANIYAY (111 aa)) is P-domain. A compositionally biased stretch (basic and acidic residues) spans 207–251 (KIKDPDAAKPEDWDERAKIDDPTDSKPEDWDKPEHIPDPDAKKPE). At Lys209 the chain carries N6-acetyllysine. A run of 6 repeats spans residues 210 to 221 (DPDAAKPEDWDE), 227 to 238 (DPTDSKPEDWDK), 244 to 255 (DPDAKKPEDWDE), 259 to 269 (GEWEPPVIQNP), 273 to 283 (GEWKPRQIDNP), and 287 to 297 (GTWIHPEIDNP). Residues 237 to 270 (DKPEHIPDPDAKKPEDWDEEMDGEWEPPVIQNPE) form an interaction with PPIB region. Residues 252–261 (DWDEEMDGEW) show a composition bias toward acidic residues. Residues 259-297 (GEWEPPVIQNPEYKGEWKPRQIDNPDYKGTWIHPEIDNP) form a 3 X approximate repeats region. A C-domain region spans residues 309 to 416 (DSFAVLGLDL…DATGQAKDEL (108 aa)). An alpha-D-glucoside is bound at residue Asp317. Asp328 serves as a coordination point for Ca(2+). The segment at 350–416 (TKAAEKQMKD…DATGQAKDEL (67 aa)) is disordered. Over residues 352-379 (AAEKQMKDKQDEEQRLKEEEEDKKRKEE) the composition is skewed to basic and acidic residues. Residues 380–408 (EEAEDKEDEDDRDEDEDEEDEKEEDEEDA) show a composition bias toward acidic residues. A Prevents secretion from ER motif is present at residues 413–416 (KDEL).

The protein belongs to the calreticulin family. Monomer. Component of an EIF2 complex at least composed of CELF1/CUGBP1, CALR, CALR3, EIF2S1, EIF2S2, HSP90B1 and HSPA5. Interacts with GABARAP, NR3C1 and TRIM21. Interacts with PPIB and SPACA9. Interacts (via P-domain) with PDIA5. Interacts with PDIA3/ERp57. Interacts with CLCC1. Predentin and odontoblast.

Its subcellular location is the endoplasmic reticulum lumen. It is found in the cytoplasm. The protein resides in the cytosol. The protein localises to the secreted. It localises to the extracellular space. Its subcellular location is the extracellular matrix. It is found in the cell surface. The protein resides in the sarcoplasmic reticulum lumen. The protein localises to the cytoplasmic vesicle. It localises to the secretory vesicle. Its subcellular location is the cortical granule. It is found in the cytolytic granule. Calcium-binding chaperone that promotes folding, oligomeric assembly and quality control in the endoplasmic reticulum (ER) via the calreticulin/calnexin cycle. This lectin interacts transiently with almost all of the monoglucosylated glycoproteins that are synthesized in the ER. Interacts with the DNA-binding domain of NR3C1 and mediates its nuclear export. Involved in maternal gene expression regulation. May participate in oocyte maturation via the regulation of calcium homeostasis. Present in the cortical granules of non-activated oocytes, is exocytosed during the cortical reaction in response to oocyte activation and might participate in the block to polyspermy. This chain is Calreticulin (Calr), found in Rattus norvegicus (Rat).